A 1091-amino-acid chain; its full sequence is ATP-dependent helicase/deoxyribonuclease subunit B (1091 aa).

It belongs to the helicase family. AddB/RexB type 2 subfamily. In terms of assembly, heterodimer of AddA and RexB. Requires Mg(2+) as cofactor.

The heterodimer acts as both an ATP-dependent DNA helicase and an ATP-dependent, dual-direction single-stranded exonuclease. Recognizes the chi site generating a DNA molecule suitable for the initiation of homologous recombination. This subunit has 5' -&gt; 3' nuclease activity but not helicase activity. This chain is ATP-dependent helicase/deoxyribonuclease subunit B, found in Streptococcus pneumoniae (strain ATCC 700669 / Spain 23F-1).